Here is a 1607-residue protein sequence, read N- to C-terminus: Putative molluscan insulin-related peptide(s) receptor (1607 aa).

A signal peptide spans 1-35 (MHPGSISFNMIINKCIPICLFILFIMMMEFTVSKA). N82, N188, N245, N275, N332, N343, N495, N520, N663, N710, N778, N796, N802, N868, N879, N940, and N953 each carry an N-linked (GlcNAc...) asparagine glycan. 3 Fibronectin type-III domains span residues 517–632 (HDLN…TYPF), 636–726 (EPTD…SKEE), and 756–861 (LPDE…TKDS). Residues 698–975 (EKVKIEEEGK…RPPDPESSNT (278 aa)) are Extracellular-facing. Residues 870 to 967 (TTVDTEIETN…LERFFIVPRP (98 aa)) form the Fibronectin type-III 4 domain. A helical membrane pass occupies residues 976-996 (LLIVAIVLAFFGVLTVSLIVA). The Cytoplasmic portion of the chain corresponds to 997–1607 (CVYYKQKIRS…WSTLKMVLVL (611 aa)). The Protein kinase domain occupies 1037–1308 (IKLIKELGQG…AIIEYLLPKL (272 aa)). Residues 1043 to 1051 (LGQGSFGMV) and K1072 contribute to the ATP site. Catalysis depends on D1173, which acts as the Proton acceptor. Y1199 bears the Phosphotyrosine; by autocatalysis mark. Disordered stretches follow at residues 1328-1352 (GAGEGTLAEPEGSDDSSSINSLSCE) and 1501-1539 (TLNGNQSSHNNNSFELMTPDPLKSGPASESSNGVSSSSW). Positions 1503–1515 (NGNQSSHNNNSFE) are enriched in polar residues. Residues 1524-1538 (SGPASESSNGVSSSS) are compositionally biased toward low complexity.

The protein belongs to the protein kinase superfamily. Tyr protein kinase family. Insulin receptor subfamily. Probable tetramer of 2 alpha and 2 beta chains linked by disulfide bonds. The alpha chains contribute to the formation of the ligand-binding domain, while the beta chains carry the kinase domain. Mn(2+) serves as cofactor.

It is found in the membrane. The catalysed reaction is L-tyrosyl-[protein] + ATP = O-phospho-L-tyrosyl-[protein] + ADP + H(+). Its function is as follows. This receptor probably binds to the four different molluscan insulin-related peptides and has a tyrosine-protein kinase activity. In Lymnaea stagnalis (Great pond snail), this protein is Putative molluscan insulin-related peptide(s) receptor.